The chain runs to 637 residues: DNA mismatch repair protein MutL (637 aa).

The segment covering 343-352 (QQSPDRQVSP) has biased composition (polar residues). The interval 343 to 411 (QQSPDRQVSP…SARNGDVSLP (69 aa)) is disordered. The span at 365 to 380 (SIERKPSVSYDVRDSH) shows a compositional bias: basic and acidic residues. Over residues 388–397 (YSSGSSSYRS) the composition is skewed to low complexity.

This sequence belongs to the DNA mismatch repair MutL/HexB family.

In terms of biological role, this protein is involved in the repair of mismatches in DNA. It is required for dam-dependent methyl-directed DNA mismatch repair. May act as a 'molecular matchmaker', a protein that promotes the formation of a stable complex between two or more DNA-binding proteins in an ATP-dependent manner without itself being part of a final effector complex. In Shewanella halifaxensis (strain HAW-EB4), this protein is DNA mismatch repair protein MutL.